The chain runs to 186 residues: Protein FAM219A (186 aa).

Disordered regions lie at residues 1 to 47 (MMEE…NYKP) and 59 to 132 (ELAR…GYSS). Residues 67–81 (KNGTVGSPVNQQPKK) show a composition bias toward polar residues. The span at 123 to 132 (SRYSSSGYSS) shows a compositional bias: low complexity.

It belongs to the FAM219 family.

The sequence is that of Protein FAM219A (fam219a) from Danio rerio (Zebrafish).